Consider the following 1679-residue polypeptide: AF4/FMR2 family member lilli (1679 aa).

Disordered regions lie at residues 1–21 (MAQQ…SSIN), 55–78 (NYNM…QQGI), 124–305 (RSAP…EKDV), 406–539 (LHQL…GAQN), 580–609 (MGAG…SNKW), 733–755 (DSGT…AVGG), 783–1172 (QPTQ…TTPH), and 1197–1319 (TPAQ…LQIG). Over residues 69–78 (REKIERQQGI) the composition is skewed to basic and acidic residues. 2 stretches are compositionally biased toward low complexity: residues 144-181 (SLGH…QQQQ) and 212-244 (PSSS…SSGG). A Phosphothreonine modification is found at threonine 421. Over residues 429–442 (LKTEKNHSLEKQDS) the composition is skewed to basic and acidic residues. The span at 444-455 (LENDLELSESED) shows a compositional bias: acidic residues. Serine 451 and serine 453 each carry phosphoserine. Low complexity predominate over residues 464–484 (SAGNSSNSSESDSSESGSESS). Positions 492-501 (HPNHQQHHHQ) are enriched in basic residues. Over residues 502–532 (LQQQQQQQQQQASMQQQQVLQQQQQHRPQPL) the composition is skewed to low complexity. Over residues 582–591 (AGSGSGGTLS) the composition is skewed to gly residues. Over residues 598–609 (NKTPSPTESNKW) the composition is skewed to polar residues. A compositionally biased stretch (low complexity) spans 733–752 (DSGTSASGSSSSSSSSSDSA). A compositionally biased stretch (polar residues) spans 783–796 (QPTQSQKAPPSNSV). Positions 810-820 (QRQKKPRKKKA) are enriched in basic residues. Serine 829 and serine 830 each carry phosphoserine. Positions 859 to 871 (KKGRGRPRKQQQS) form a DNA-binding region, a.T hook. Positions 868–906 (QQQSGGSGNLSSASAGSSSQTKGPTLTAAKKPLAKTPLA) are enriched in low complexity. Phosphoserine is present on residues serine 879 and serine 881. A compositionally biased stretch (polar residues) spans 917–927 (SQSSSNGNTPT). Low complexity-rich tracts occupy residues 957-973 (SSSA…SSSS) and 1001-1012 (GSGSSSPSSSGS). The segment covering 1019–1030 (TRSQVGSGQALA) has biased composition (polar residues). Positions 1042–1068 (SQHSQHLSSSECSSSSGGCTAVCSSSS) are enriched in low complexity. The span at 1073–1090 (EGRREKERERKPKSDKNK) shows a compositional bias: basic and acidic residues. A compositionally biased stretch (pro residues) spans 1130–1140 (QPPPPQAPPAA). A compositionally biased stretch (polar residues) spans 1198–1213 (PAQQNGHLTPKDQATN). Composition is skewed to basic and acidic residues over residues 1234–1251 (EHPV…EAKF) and 1260–1288 (FQLK…EQPP). The residue at position 1368 (serine 1368) is a Phosphoserine. The residue at position 1370 (threonine 1370) is a Phosphothreonine. Residues 1569-1589 (GNTPSSISPSNSVGSQGSGSN) show a composition bias toward low complexity. The segment at 1569–1594 (GNTPSSISPSNSVGSQGSGSNTPPGR) is disordered.

Belongs to the AF4 family.

The protein localises to the nucleus. Has a role in transcriptional regulation. Acts in parallel with the Ras/MAPK and the PI3K/PKB pathways in the control of cell identity and cellular growth. Essential for regulation of the cytoskeleton and cell growth but not for cell proliferation or growth rate. Required specifically for the microtubule-based basal transport of lipid droplets. Plays a partially redundant function downstream of Raf in cell fate specification in the developing eye. Pair-rule protein that regulates embryonic cellularization, gastrulation and segmentation. The polypeptide is AF4/FMR2 family member lilli (Drosophila erecta (Fruit fly)).